The following is a 520-amino-acid chain: Amine oxidase [flavin-containing] B (520 aa).

Over 1–489 (MNSKCDVVVV…TFLERHLPSV (489 aa)) the chain is Cytoplasmic. An N6-acetyllysine modification is found at K52. Residue C397 is modified to S-8alpha-FAD cysteine. The helical; Anchor for type IV membrane protein transmembrane segment at 490-516 (PGLLRLIRLTTVVSAVALGFLAQKRGL) threads the bilayer. Residues 517 to 520 (LLRI) are Mitochondrial intermembrane-facing.

The protein belongs to the flavin monoamine oxidase family. Monomer, homo- or heterodimer (containing two subunits of similar size). Each subunit contains a covalently bound flavin. Enzymatically active as monomer. The cofactor is FAD.

The protein resides in the mitochondrion outer membrane. The enzyme catalyses a secondary aliphatic amine + O2 + H2O = a primary amine + an aldehyde + H2O2. It carries out the reaction (R)-adrenaline + O2 + H2O = (R)-3,4-dihydroxymandelaldehyde + methylamine + H2O2. It catalyses the reaction a primary methyl amine + O2 + H2O = an aldehyde + H2O2 + NH4(+). The catalysed reaction is benzylamine + O2 + H2O = benzaldehyde + H2O2 + NH4(+). The enzyme catalyses dopamine + O2 + H2O = 3,4-dihydroxyphenylacetaldehyde + H2O2 + NH4(+). It carries out the reaction tyramine + O2 + H2O = (4-hydroxyphenyl)acetaldehyde + H2O2 + NH4(+). It catalyses the reaction (R)-noradrenaline + O2 + H2O = (R)-3,4-dihydroxymandelaldehyde + H2O2 + NH4(+). The catalysed reaction is 2-phenylethylamine + O2 + H2O = 2-phenylacetaldehyde + H2O2 + NH4(+). The enzyme catalyses N-acetylputrescine + O2 + H2O = 4-acetamidobutanal + H2O2 + NH4(+). Functionally, catalyzes the oxidative deamination of primary and some secondary amines such as neurotransmitters, and exogenous amines including the tertiary amine, neurotoxin 1-methyl-4-phenyl-1,2,3,6-tetrahydropyridine (MPTP), with concomitant reduction of oxygen to hydrogen peroxide and participates in the metabolism of neuroactive and vasoactive amines in the central nervous system and peripheral tissues. Preferentially degrades benzylamine and phenylethylamine. The polypeptide is Amine oxidase [flavin-containing] B (Cavia porcellus (Guinea pig)).